A 120-amino-acid chain; its full sequence is Aspartate 1-decarboxylase (120 aa).

The Schiff-base intermediate with substrate; via pyruvic acid role is filled by Ser-25. At Ser-25 the chain carries Pyruvic acid (Ser). Thr-57 is a binding site for substrate. Catalysis depends on Tyr-58, which acts as the Proton donor. 73 to 75 (GAA) contacts substrate.

This sequence belongs to the PanD family. Heterooctamer of four alpha and four beta subunits. Pyruvate serves as cofactor. Post-translationally, is synthesized initially as an inactive proenzyme, which is activated by self-cleavage at a specific serine bond to produce a beta-subunit with a hydroxyl group at its C-terminus and an alpha-subunit with a pyruvoyl group at its N-terminus.

The protein resides in the cytoplasm. It catalyses the reaction L-aspartate + H(+) = beta-alanine + CO2. The protein operates within cofactor biosynthesis; (R)-pantothenate biosynthesis; beta-alanine from L-aspartate: step 1/1. Catalyzes the pyruvoyl-dependent decarboxylation of aspartate to produce beta-alanine. The protein is Aspartate 1-decarboxylase of Ralstonia pickettii (strain 12J).